The primary structure comprises 267 residues: tRNA pseudouridine synthase A (267 aa).

Catalysis depends on D52, which acts as the Nucleophile. Substrate is bound at residue Y113.

This sequence belongs to the tRNA pseudouridine synthase TruA family. As to quaternary structure, homodimer.

The enzyme catalyses uridine(38/39/40) in tRNA = pseudouridine(38/39/40) in tRNA. Its function is as follows. Formation of pseudouridine at positions 38, 39 and 40 in the anticodon stem and loop of transfer RNAs. The chain is tRNA pseudouridine synthase A from Chlamydia pneumoniae (Chlamydophila pneumoniae).